Reading from the N-terminus, the 487-residue chain is UDP-N-acetylmuramate--L-alanine ligase (487 aa).

Residue 122–128 (GTHGKTS) coordinates ATP.

This sequence belongs to the MurCDEF family.

Its subcellular location is the cytoplasm. The catalysed reaction is UDP-N-acetyl-alpha-D-muramate + L-alanine + ATP = UDP-N-acetyl-alpha-D-muramoyl-L-alanine + ADP + phosphate + H(+). Its pathway is cell wall biogenesis; peptidoglycan biosynthesis. Functionally, cell wall formation. The protein is UDP-N-acetylmuramate--L-alanine ligase of Corynebacterium urealyticum (strain ATCC 43042 / DSM 7109).